The following is a 1154-amino-acid chain: PAN2-PAN3 deadenylation complex catalytic subunit pan2 (1154 aa).

WD repeat units lie at residues 20-59 (GLPT…RYTS), 102-145 (THDE…DKLR), and 276-315 (ATVS…HFNE). A linker region spans residues 316-451 (MSKEVEFADV…GARISGESED (136 aa)). The region spanning 452-821 (DPLLKYSNVE…SPCVLAFQVR (370 aa)) is the USP domain. The 179-residue stretch at 870-1048 (VALDTEFVDL…IEDARMALRL (179 aa)) folds into the Exonuclease domain. 4 residues coordinate a divalent metal cation: D873, E875, D982, and D1041. The tract at residues 1092 to 1154 (PGTAVTMQNN…GEFFTGSPLK (63 aa)) is disordered. Composition is skewed to polar residues over residues 1096–1109 (VTMQ…TPST) and 1132–1141 (LTPSNGTFSG).

This sequence belongs to the peptidase C19 family. PAN2 subfamily. As to quaternary structure, forms a heterotrimer with an asymmetric homodimer of the regulatory subunit pan3 to form the poly(A)-nuclease (PAN) deadenylation complex. It depends on a divalent metal cation as a cofactor.

The protein resides in the cytoplasm. It catalyses the reaction Exonucleolytic cleavage of poly(A) to 5'-AMP.. Its activity is regulated as follows. Positively regulated by the regulatory subunit pan3. Its function is as follows. Catalytic subunit of the poly(A)-nuclease (PAN) deadenylation complex, one of two cytoplasmic mRNA deadenylases involved in mRNA turnover. PAN specifically shortens poly(A) tails of RNA and the activity is stimulated by poly(A)-binding protein pab1. PAN deadenylation is followed by rapid degradation of the shortened mRNA tails by the CCR4-NOT complex. Deadenylated mRNAs are then degraded by two alternative mechanisms, namely exosome-mediated 3'-5' exonucleolytic degradation, or deadenylation-dependent mRNA decaping and subsequent 5'-3' exonucleolytic degradation by xrn1. May also be involved in post-transcriptional maturation of mRNA poly(A) tails. The sequence is that of PAN2-PAN3 deadenylation complex catalytic subunit pan2 from Emericella nidulans (strain FGSC A4 / ATCC 38163 / CBS 112.46 / NRRL 194 / M139) (Aspergillus nidulans).